The primary structure comprises 206 residues: dCTP deaminase, dUMP-forming (206 aa).

Residues 117–122 (RSSFGR), aspartate 135, 143–145 (TLE), glutamine 163, tyrosine 177, lysine 184, and glutamine 188 each bind dCTP. Glutamate 145 acts as the Proton donor/acceptor in catalysis.

The protein belongs to the dCTP deaminase family. In terms of assembly, homotrimer.

The catalysed reaction is dCTP + 2 H2O = dUMP + NH4(+) + diphosphate. Its pathway is pyrimidine metabolism; dUMP biosynthesis; dUMP from dCTP: step 1/1. In terms of biological role, bifunctional enzyme that catalyzes both the deamination of dCTP to dUTP and the hydrolysis of dUTP to dUMP without releasing the toxic dUTP intermediate. This chain is dCTP deaminase, dUMP-forming, found in Methanococcus maripaludis (strain C6 / ATCC BAA-1332).